The sequence spans 37 residues: Large ribosomal subunit protein bL36 (37 aa).

The protein belongs to the bacterial ribosomal protein bL36 family.

The protein is Large ribosomal subunit protein bL36 of Variovorax paradoxus (strain S110).